We begin with the raw amino-acid sequence, 260 residues long: Putative hydro-lyase Dshi_0610 (260 aa).

The protein belongs to the D-glutamate cyclase family.

This chain is Putative hydro-lyase Dshi_0610, found in Dinoroseobacter shibae (strain DSM 16493 / NCIMB 14021 / DFL 12).